The following is a 299-amino-acid chain: Formylglycine-generating enzyme (299 aa).

The Cu cation site is built by Cys-263 and Cys-268.

It belongs to the sulfatase-modifying factor family. Cu cation is required as a cofactor.

The enzyme catalyses L-cysteinyl-[sulfatase] + 2 a thiol + O2 = an organic disulfide + 3-oxo-L-alanyl-[sulfatase] + hydrogen sulfide + H2O + H(+). The protein operates within protein modification; sulfatase oxidation. In terms of biological role, oxidase that catalyzes the conversion of cysteine to 3-oxoalanine on target proteins. 3-oxoalanine modification, which is also named formylglycine (fGly), occurs in the maturation of arylsulfatases and some alkaline phosphatases that use the hydrated form of 3-oxoalanine as a catalytic nucleophile. The polypeptide is Formylglycine-generating enzyme (Mycobacterium tuberculosis (strain ATCC 25618 / H37Rv)).